The primary structure comprises 119 residues: Large ribosomal subunit protein uL18 (119 aa).

It belongs to the universal ribosomal protein uL18 family. In terms of assembly, part of the 50S ribosomal subunit; part of the 5S rRNA/L5/L18/L25 subcomplex. Contacts the 5S and 23S rRNAs.

In terms of biological role, this is one of the proteins that bind and probably mediate the attachment of the 5S RNA into the large ribosomal subunit, where it forms part of the central protuberance. This Staphylococcus aureus (strain Mu3 / ATCC 700698) protein is Large ribosomal subunit protein uL18.